The sequence spans 1002 residues: MALPVAEGTADTPLSPARDDSGSTSSGMWAALYDYEARGEDELSLRRGQLVEVLSQDAAVSGDEGWWAGQVQRRLGIFPASYVAPCGPVPPPAPPPPRPCSPVHVDFERLELKELIGAGGFGQVYRATWQGQEVAVKAARRDPEQDAAAAAESVRREARLFAMLRHPNIIQLRGVCLRQPHLCLVLEFARGGALNRALAAAASDPRAPGPRRARRIPPQVLVNWAVQIARGMLYLHEEAVVPILHRDLKSSNILLLEKIEHDDICNKTLKITDFGLAREWHRTTRMSAAGTYAWMAPEVIRSSLFSKGSDIWSYGVLLWELLTGEVPYRGIDGLAVAYGVAVNKLTLPIPSTCPEPFAKLMKECWEQDPHIRPSFALILQQLTAIEEAVLTNMPQESFHSMQEDWKLEIQQMFSELRTKEKELRSREEELSRAALQQKSQELLLRRREQQLAEREIDVLERELNVLIFQLSQEAPHVKKRKGRFRRGRLRLKDGHRISLPSDFQHKITVQASPTLDKRRSSDSGLCSPPGSPLMLPRLRAIQLTSDENNKTRGRNMVFRQEDFEDVKRSFKKKGCTWGPSSVQTKERPEGRERVRPLSDGNSPWSSLLIKSQKTTPLASLFVDQPGSCEEQKLVPEGLEHRKPKQTKFPGQAHVGLPLCKDSQREDSSEAESREEGSPKGSPVNNVGAPMLRKKTESALCECGMLLASMALGLDVRKLHGAQAPAKPSPKMEKKEEGALQPASRCQSSPSSLLRQPSAGRAPSGGSTLLLPSAPSHSSKSSLSMKCLLQAGKEESSLGNARDLCGPTTLTPDPGSAAPESGCELIPGLRPKTDYGVLRSMPHAILEQTGERLPGCAIVGDKGCHHMQMGSEETPLWLQSAPEDSGLPHSPSPGPQRDLASQASLVKPEGVLGECQACPALPQRPHTASVRTTSPPTWVCDKDHQVPALACLLGAQERSRCQTPSLLDASIEGQKKDCAMPLCRVKSVMCQPSIYALEKDFLT.

The disordered stretch occupies residues 1 to 26; sequence MALPVAEGTADTPLSPARDDSGSTSS. The SH3 domain maps to 24-88; sequence TSSGMWAALY…PASYVAPCGP (65 aa). A Protein kinase domain is found at 110-390; it reads LELKELIGAG…QLTAIEEAVL (281 aa). ATP contacts are provided by residues 116 to 124 and Lys137; that span reads IGAGGFGQV. Residue Asp247 is the Proton acceptor of the active site. The residue at position 283 (Thr283) is a Phosphothreonine; by autocatalysis. Ser287 is subject to Phosphoserine; by autocatalysis and MAP4K1. Leucine-zipper stretches follow at residues 409-430 and 444-466; these read IQQM…EEEL and LRRR…LNVL. Disordered stretches follow at residues 508 to 531, 574 to 604, 640 to 689, 721 to 778, 797 to 823, and 878 to 899; these read TVQA…PPGS, GCTW…NSPW, HRKP…VGAP, AQAP…SHSS, LGNA…SGCE, and QSAP…RDLA. Ser512, Ser527, and Ser531 each carry phosphoserine. Position 576 is a phosphothreonine (Thr576). The segment covering 584–596 has biased composition (basic and acidic residues); sequence TKERPEGRERVRP. Phosphoserine is present on Ser598. Residues 661–677 are compositionally biased toward basic and acidic residues; sequence DSQREDSSEAESREEGS. Composition is skewed to low complexity over residues 740 to 758 and 766 to 778; these read QPAS…QPSA and STLL…SHSS.

This sequence belongs to the protein kinase superfamily. STE Ser/Thr protein kinase family. MAP kinase kinase kinase subfamily. Homodimer. Interacts with TLR4. Requires Mg(2+) as cofactor. Post-translationally, autophosphorylation on serine and threonine residues within the activation loop plays a role in enzyme activation.

It catalyses the reaction L-seryl-[protein] + ATP = O-phospho-L-seryl-[protein] + ADP + H(+). The enzyme catalyses L-threonyl-[protein] + ATP = O-phospho-L-threonyl-[protein] + ADP + H(+). Its activity is regulated as follows. Homodimerization via the leucine zipper domains is required for autophosphorylation and subsequent activation. Its function is as follows. Negative regulator of TLR4 signaling. Does not activate JNK1/MAPK8 pathway, p38/MAPK14, nor ERK2/MAPK1 pathways. The chain is Mitogen-activated protein kinase kinase kinase 21 (Map3k21) from Mus musculus (Mouse).